An 83-amino-acid chain; its full sequence is U5-theraphotoxin-Hs1a 5 (83 aa).

The N-terminal stretch at 1–21 (MKTSMFLTLTGLVLLFVVCYA) is a signal peptide. Positions 22-49 (SESEEKEFPKELPSSIFAADSDFKVEER) are excised as a propeptide. Cystine bridges form between cysteine 51/cysteine 63, cysteine 56/cysteine 68, and cysteine 62/cysteine 75.

Belongs to the neurotoxin 10 (Hwtx-1) family. 51 (Hntx-8) subfamily. Hntx-8 sub-subfamily. Expressed by the venom gland.

The protein resides in the secreted. In terms of biological role, agglutinates erythrocytes. The polypeptide is U5-theraphotoxin-Hs1a 5 (Cyriopagopus schmidti (Chinese bird spider)).